A 101-amino-acid chain; its full sequence is UPF0235 protein SG2030 (101 aa).

The protein belongs to the UPF0235 family.

This Sodalis glossinidius (strain morsitans) protein is UPF0235 protein SG2030.